Here is a 334-residue protein sequence, read N- to C-terminus: MTAKVGINGFGRIGRIVFRNSFSHENTEVVMVNDPFIEVQYAAYMLKYDSTHGNFEYDVHIDGDSIVVNGKKVKFYAEKDPAKIPWKDAGAEYIIESTGVFTTVEKASAHLQGGAKKVIISAPSADAPMYVMGVNEKTYAGADVVSNASCTTNCLAPLTKVLHERFGVVEGLMTAVHAYTATQKLVDAPSKKDWRGGRAAAQNLIPSSTGAAKAVGKVIPELQGKVTGMSIRVPTSNVSVVDLTCRLEKGASYEEIITAIKEAAQGELKGILDYTEDDVVSSDMKGNPHSSIVDIKAGISLNPNFLKIVSWYDNEWGYSRRVLDLTAYIASVGK.

Residues 12-13 (RI), Asp-34, and Ser-121 each bind NAD(+). D-glyceraldehyde 3-phosphate-binding positions include 149-151 (SCT), Thr-180, 209-210 (TG), and Arg-232. Cys-150 acts as the Nucleophile in catalysis. Residue Asn-314 coordinates NAD(+).

It belongs to the glyceraldehyde-3-phosphate dehydrogenase family. In terms of assembly, homotetramer.

It catalyses the reaction D-glyceraldehyde 3-phosphate + phosphate + NAD(+) = (2R)-3-phospho-glyceroyl phosphate + NADH + H(+). It functions in the pathway carbohydrate degradation; glycolysis; pyruvate from D-glyceraldehyde 3-phosphate: step 1/5. In terms of biological role, glyceraldehyde-3-phosphate dehydrogenase; part of the gene cluster that mediates the biosynthesis of heptelidic acid (HA), a sesquiterpene lactone that acts as an inhibitor of glyceraldehyde-3-phosphatedehydrogenase (GAPDH) and a growth inhibitor of the salt-tolerant lactic acid bacteria in soy sauce brewing. The GAPDPH hepG/gdpB shows much higher resistance to HA than the GAPDH gpdA located outside of the cluster, but it does not seem to act in self-resistance. The sequence is that of Glyceraldehyde-3-phosphate dehydrogenase B from Aspergillus oryzae (strain ATCC 42149 / RIB 40) (Yellow koji mold).